A 456-amino-acid polypeptide reads, in one-letter code: UPF0210 protein Dde_3704 (456 aa).

The protein belongs to the UPF0210 family. In terms of assembly, homodimer.

The protein is UPF0210 protein Dde_3704 of Oleidesulfovibrio alaskensis (strain ATCC BAA-1058 / DSM 17464 / G20) (Desulfovibrio alaskensis).